The sequence spans 205 residues: Holliday junction branch migration complex subunit RuvA (205 aa).

Residues Met-1–Lys-62 are domain I. Positions Thr-63 to Leu-141 are domain II. Residues Phe-142–Lys-152 form a flexible linker region. The domain III stretch occupies residues Gly-153–Arg-205.

It belongs to the RuvA family. In terms of assembly, homotetramer. Forms an RuvA(8)-RuvB(12)-Holliday junction (HJ) complex. HJ DNA is sandwiched between 2 RuvA tetramers; dsDNA enters through RuvA and exits via RuvB. An RuvB hexamer assembles on each DNA strand where it exits the tetramer. Each RuvB hexamer is contacted by two RuvA subunits (via domain III) on 2 adjacent RuvB subunits; this complex drives branch migration. In the full resolvosome a probable DNA-RuvA(4)-RuvB(12)-RuvC(2) complex forms which resolves the HJ.

It is found in the cytoplasm. Its function is as follows. The RuvA-RuvB-RuvC complex processes Holliday junction (HJ) DNA during genetic recombination and DNA repair, while the RuvA-RuvB complex plays an important role in the rescue of blocked DNA replication forks via replication fork reversal (RFR). RuvA specifically binds to HJ cruciform DNA, conferring on it an open structure. The RuvB hexamer acts as an ATP-dependent pump, pulling dsDNA into and through the RuvAB complex. HJ branch migration allows RuvC to scan DNA until it finds its consensus sequence, where it cleaves and resolves the cruciform DNA. The chain is Holliday junction branch migration complex subunit RuvA from Bacillus cytotoxicus (strain DSM 22905 / CIP 110041 / 391-98 / NVH 391-98).